Consider the following 236-residue polypeptide: Small ribosomal subunit protein uS2c (236 aa).

This sequence belongs to the universal ribosomal protein uS2 family.

The protein resides in the plastid. The protein localises to the chloroplast. The protein is Small ribosomal subunit protein uS2c (rps2) of Barbarea verna (Land cress).